The primary structure comprises 1403 residues: Centrosomal protein of 162 kDa (1403 aa).

Positions 19–44 (ELSDDSFENSNETPSQPNKDRKKKDT) are disordered. The span at 26 to 35 (ENSNETPSQP) shows a compositional bias: polar residues. Phosphoserine is present on residues S156 and S159. Disordered regions lie at residues 171 to 235 (NVEP…EKTG), 305 to 342 (DTGE…TTES), and 449 to 586 (NPSL…SDDS). The segment covering 176-189 (EGGRENESEHKELP) has biased composition (basic and acidic residues). Over residues 192-204 (YSDDFEDAEDTDE) the composition is skewed to acidic residues. A compositionally biased stretch (basic and acidic residues) spans 206-220 (LITKDEETRPKENPE). Positions 449–466 (NPSLLPQDNKANQTSRSR) are enriched in polar residues. Phosphoserine is present on S468. The segment covering 481–496 (PCKKARSAPPLPRRKP) has biased composition (basic residues). The segment covering 504 to 517 (ARSSGYSKPSSPLQ) has biased composition (polar residues). Basic and acidic residues-rich tracts occupy residues 522–532 (LEKKTSKDNTK) and 567–581 (PHRE…RPED). Coiled-coil stretches lie at residues 610–1120 (KRAQ…MLSR), 1170–1205 (EVLE…QLES), and 1234–1385 (CQNA…LHRQ).

Belongs to the CEP162 family. Interacts with alpha-tubulin. Interacts with CPNE4. Interacts with CEP290.

It is found in the cytoplasm. The protein localises to the cytoskeleton. Its subcellular location is the microtubule organizing center. The protein resides in the centrosome. It localises to the centriole. It is found in the spindle. The protein localises to the nucleus. In terms of biological role, required to promote assembly of the transition zone in primary cilia. Acts by specifically recognizing and binding the axonemal microtubule. Localizes to the distal ends of centrioles before ciliogenesis and directly binds to axonemal microtubule, thereby promoting and restricting transition zone formation specifically at the cilia base. Required to mediate CEP290 association with microtubules. The protein is Centrosomal protein of 162 kDa (Cep162) of Rattus norvegicus (Rat).